A 497-amino-acid chain; its full sequence is Angiopoietin-1 (497 aa).

The signal sequence occupies residues 1–19; the sequence is MTVFLSFAFLAAILTHIGC. 5 N-linked (GlcNAc...) asparagine glycosylation sites follow: asparagine 92, asparagine 122, asparagine 154, asparagine 243, and asparagine 294. The stretch at 158–256 forms a coiled coil; that stretch reads RLEIQLLENS…LQKQQLELMD (99 aa). One can recognise a Fibrinogen C-terminal domain in the interval 276-496; it reads KEEEKPFRDC…STTMMIRPLD (221 aa). Disulfide bonds link cysteine 285-cysteine 314 and cysteine 438-cysteine 451.

In terms of assembly, homooligomer. Interacts with TEK/TIE2. Interacts with SVEP1/polydom. Interacts with THBD; this interaction significantly inhibits the generation of activated PC and TAFIa/CPB2 by the thrombin/thrombomodulin complex.

The protein resides in the secreted. In terms of biological role, binds and activates TIE2 receptor by inducing its tyrosine phosphorylation. Implicated in endothelial developmental processes later and distinct from that of VEGF. Appears to play a crucial role in mediating reciprocal interactions between the endothelium and surrounding matrix and mesenchyme. Mediates blood vessel maturation/stability. It may play an important role in the heart early development. The protein is Angiopoietin-1 (ANGPT1) of Canis lupus familiaris (Dog).